A 177-amino-acid chain; its full sequence is MDLPGPIHDIFLVFLGSGLILGGLGVVLLTNPVYSAFSLGLVLVCISLFHIPSNSYFVAAAQLLIYVGAINVLIVFAVMFMNGSEYYNYFHLWTVGDGVTSLICTSILFSLIKTILDTSWYGIIWTTRSNQIIEQDLISNVQQIGIHLSTDFYLPFELISIILLVALVGAIAMARQE.

5 consecutive transmembrane segments (helical) span residues 10 to 30 (IFLVFLGSGLILGGLGVVLLT), 32 to 52 (PVYSAFSLGLVLVCISLFHIP), 61 to 81 (AQLLIYVGAINVLIVFAVMFM), 92 to 112 (LWTVGDGVTSLICTSILFSLI), and 152 to 172 (FYLPFELISIILLVALVGAIA).

The protein belongs to the complex I subunit 6 family. In terms of assembly, NDH is composed of at least 16 different subunits, 5 of which are encoded in the nucleus.

It localises to the plastid. The protein resides in the chloroplast thylakoid membrane. The enzyme catalyses a plastoquinone + NADH + (n+1) H(+)(in) = a plastoquinol + NAD(+) + n H(+)(out). The catalysed reaction is a plastoquinone + NADPH + (n+1) H(+)(in) = a plastoquinol + NADP(+) + n H(+)(out). NDH shuttles electrons from NAD(P)H:plastoquinone, via FMN and iron-sulfur (Fe-S) centers, to quinones in the photosynthetic chain and possibly in a chloroplast respiratory chain. The immediate electron acceptor for the enzyme in this species is believed to be plastoquinone. Couples the redox reaction to proton translocation, and thus conserves the redox energy in a proton gradient. This is NAD(P)H-quinone oxidoreductase subunit 6, chloroplastic (ndhG) from Illicium oligandrum (Star anise).